A 717-amino-acid polypeptide reads, in one-letter code: DNA ligase (717 aa).

NAD(+) is bound by residues 41–45 (DARYD), 90–91 (SL), and E124. Residue K126 is the N6-AMP-lysine intermediate of the active site. NAD(+) contacts are provided by R147, E183, K299, and K323. Residues C428, C431, C446, and C452 each coordinate Zn(2+). The BRCT domain maps to 636–717 (ADYSPVAGKT…WLQLINEHHI (82 aa)).

The protein belongs to the NAD-dependent DNA ligase family. LigA subfamily. Mg(2+) is required as a cofactor. It depends on Mn(2+) as a cofactor.

It carries out the reaction NAD(+) + (deoxyribonucleotide)n-3'-hydroxyl + 5'-phospho-(deoxyribonucleotide)m = (deoxyribonucleotide)n+m + AMP + beta-nicotinamide D-nucleotide.. DNA ligase that catalyzes the formation of phosphodiester linkages between 5'-phosphoryl and 3'-hydroxyl groups in double-stranded DNA using NAD as a coenzyme and as the energy source for the reaction. It is essential for DNA replication and repair of damaged DNA. This is DNA ligase from Bartonella bacilliformis (strain ATCC 35685 / KC583 / Herrer 020/F12,63).